The primary structure comprises 643 residues: E3 ubiquitin-protein ligase AMFR (643 aa).

6 helical membrane-spanning segments follow: residues 82–102, 122–142, 186–206, 215–235, 254–274, and 276–296; these read LFVW…AKLI, FWNF…VQTV, VLSL…VCCV, TLAF…HVIL, GTYV…LDLM, and HIHM…VIFM. The RING-type zinc finger occupies 341-379; the sequence is CAICWDSMQAARKLPCGHLFHNSCLRSWLEQDTSCPTCR. The chain crosses the membrane as a helical span at residues 429–449; that stretch reads IASWLPSFSVEVMHTTNILGI. The region spanning 456 to 498 is the CUE domain; the sequence is QLNAMAHQIQEMFPQVPYHLVLQDLQMTRSVEITTDNILEGRI. Residues 504–535 are disordered; that stretch reads TQRSDSLRPALNSPVERPSPDLEEGEASVQTE. Phosphoserine occurs at positions 516 and 542. The tract at residues 598–624 is disordered; that stretch reads LNKSSEDDGASERLLPSEGTSSDPVTL. The tract at residues 622–640 is VCP/p97-interacting motif (VIM); the sequence is VTLRRRMLAAAAERRLQRQ.

As to quaternary structure, interacts with RNF5. Also forms an ERAD complex containing VCP/p97, NGLY1; PSMC1; SAKS1 and RAD23B required for coupling retrotranslocation, ubiquitination and deglycosylation. Interacts with DERL1. Interacts (through a region distinct from the RING finger) with UBE2G2/UBC7. Component of the VCP/p97-AMFR/gp78 complex that enhances VCP/p97 binding to polyubiquitinated proteins for their degradation by the endoplasmic reticulum-associated degradation (ERAD) pathway. Interacts (via the VIM) with VCP/p97. Interacts (via its membrane domain) with INSIG1; the interaction initiates the sterol-mediated ubiquitination and degradation of HMGCR by the ERAD pathway. Interacts with AUP1, UBE2G2 and RNF139/TRC8; interaction with AUP1 facilitates interaction of AMFR with ubiquitin-conjugating enzyme UBE2G2 and ubiquitin ligase RNF139, leading to sterol-induced ubiquitination of HNGCR and its subsequent proteasomal degradation. Interacts with BAG6. Interacts with USP13 (via UBA 2 domain); the interaction is direct. Interacts with LMBR1L, UBAC2 and CTNNB1. Interacts with C18orf32. Palmitoylation of the RING-type zing finger by ZDHHC6 promotes localization to the peripheral endoplasmic reticulum. Expressed in heart, brain, liver, lung, skeletal muscle, kidney and testis. Not detected in spleen.

It localises to the endoplasmic reticulum membrane. The catalysed reaction is [E2 ubiquitin-conjugating enzyme]-S-ubiquitinyl-L-cysteine + [acceptor protein]-L-cysteine = [E2 ubiquitin-conjugating enzyme]-L-cysteine + [acceptor protein]-S-ubiquitinyl-L-cysteine.. Its pathway is protein modification; protein ubiquitination. Functionally, E3 ubiquitin-protein ligase that mediates the polyubiquitination of lysine and cysteine residues on target proteins, such as CD3D, CYP3A4, CFTR, INSIG1, SOAT2/ACAT2 and APOB for proteasomal degradation. Component of a VCP/p97-AMFR/gp78 complex that participates in the final step of endoplasmic reticulum-associated degradation (ERAD). The VCP/p97-AMFR/gp78 complex is involved in the sterol-accelerated ERAD degradation of HMGCR through binding to the HMGCR-INSIG1 complex at the ER membrane. In addition, interaction of AMFR with AUP1 facilitates interaction of AMFR with ubiquitin-conjugating enzyme UBE2G2 and ubiquitin ligase RNF139, leading to sterol-induced HMGCR ubiquitination. The ubiquitinated HMGCR is then released from the ER by the complex into the cytosol for subsequent destruction. In addition to ubiquitination on lysine residues, catalyzes ubiquitination on cysteine residues: together with INSIG1, mediates polyubiquitination of SOAT2/ACAT2 at 'Cys-277', leading to its degradation when the lipid levels are low. Catalyzes ubiquitination and subsequent degradation of INSIG1 when cells are depleted of sterols. Mediates polyubiquitination of INSIG2 at 'Cys-215' in some tissues, leading to its degradation. Also regulates ERAD through the ubiquitination of UBL4A a component of the BAG6/BAT3 complex. Also acts as a scaffold protein to assemble a complex that couples ubiquitination, retranslocation and deglycosylation. Mediates tumor invasion and metastasis as a receptor for the GPI/autocrine motility factor. In association with LMBR1L and UBAC2, negatively regulates the canonical Wnt signaling pathway in the lymphocytes by promoting the ubiquitin-mediated degradation of CTNNB1 and Wnt receptors FZD6 and LRP6. Regulates NF-kappa-B and MAPK signaling pathways by mediating 'Lys-27'-linked polyubiquitination of TAB3 and promoting subsequent TAK1/MAP3K7 activation. This Mus musculus (Mouse) protein is E3 ubiquitin-protein ligase AMFR (Amfr).